We begin with the raw amino-acid sequence, 342 residues long: Succinylglutamate desuccinylase (342 aa).

Residues His-63, Glu-66, and His-155 each contribute to the Zn(2+) site. Glu-219 is a catalytic residue.

It belongs to the AspA/AstE family. Succinylglutamate desuccinylase subfamily. It depends on Zn(2+) as a cofactor.

It carries out the reaction N-succinyl-L-glutamate + H2O = L-glutamate + succinate. The protein operates within amino-acid degradation; L-arginine degradation via AST pathway; L-glutamate and succinate from L-arginine: step 5/5. Its function is as follows. Transforms N(2)-succinylglutamate into succinate and glutamate. The chain is Succinylglutamate desuccinylase from Vibrio vulnificus (strain YJ016).